Here is a 468-residue protein sequence, read N- to C-terminus: Cysteine--tRNA ligase (468 aa).

Cysteine 27 provides a ligand contact to Zn(2+). The 'HIGH' region motif lies at 29–39; that stretch reads PTVYDDAHLGH. Positions 204, 234, and 238 each coordinate Zn(2+). The 'KMSKS' region signature appears at 266–270; the sequence is KMSKS. Residue lysine 269 participates in ATP binding.

This sequence belongs to the class-I aminoacyl-tRNA synthetase family. Monomer. The cofactor is Zn(2+).

It localises to the cytoplasm. It catalyses the reaction tRNA(Cys) + L-cysteine + ATP = L-cysteinyl-tRNA(Cys) + AMP + diphosphate. This is Cysteine--tRNA ligase from Campylobacter hominis (strain ATCC BAA-381 / DSM 21671 / CCUG 45161 / LMG 19568 / NCTC 13146 / CH001A).